Reading from the N-terminus, the 310-residue chain is Lipoyl synthase (310 aa).

7 residues coordinate [4Fe-4S] cluster: cysteine 61, cysteine 66, cysteine 72, cysteine 87, cysteine 91, cysteine 94, and serine 300. Positions 73-289 (FNNGTATFMI…EYIALSLGFS (217 aa)) constitute a Radical SAM core domain.

It belongs to the radical SAM superfamily. Lipoyl synthase family. It depends on [4Fe-4S] cluster as a cofactor.

It localises to the cytoplasm. The catalysed reaction is [[Fe-S] cluster scaffold protein carrying a second [4Fe-4S](2+) cluster] + N(6)-octanoyl-L-lysyl-[protein] + 2 oxidized [2Fe-2S]-[ferredoxin] + 2 S-adenosyl-L-methionine + 4 H(+) = [[Fe-S] cluster scaffold protein] + N(6)-[(R)-dihydrolipoyl]-L-lysyl-[protein] + 4 Fe(3+) + 2 hydrogen sulfide + 2 5'-deoxyadenosine + 2 L-methionine + 2 reduced [2Fe-2S]-[ferredoxin]. Its pathway is protein modification; protein lipoylation via endogenous pathway; protein N(6)-(lipoyl)lysine from octanoyl-[acyl-carrier-protein]: step 2/2. Catalyzes the radical-mediated insertion of two sulfur atoms into the C-6 and C-8 positions of the octanoyl moiety bound to the lipoyl domains of lipoate-dependent enzymes, thereby converting the octanoylated domains into lipoylated derivatives. This chain is Lipoyl synthase, found in Buchnera aphidicola subsp. Cinara cedri (strain Cc).